The following is a 79-amino-acid chain: D-alanyl carrier protein (79 aa).

Positions 1–77 constitute a Carrier domain; it reads MSIEETVIEL…KIVQGVEELQ (77 aa). S35 bears the O-(pantetheine 4'-phosphoryl)serine mark.

The protein belongs to the DltC family. 4'-phosphopantetheine is transferred from CoA to a specific serine of apo-DCP.

The protein resides in the cytoplasm. It functions in the pathway cell wall biogenesis; lipoteichoic acid biosynthesis. Functionally, carrier protein involved in the D-alanylation of lipoteichoic acid (LTA). The loading of thioester-linked D-alanine onto DltC is catalyzed by D-alanine--D-alanyl carrier protein ligase DltA. The DltC-carried D-alanyl group is further transferred to cell membrane phosphatidylglycerol (PG) by forming an ester bond, probably catalyzed by DltD. D-alanylation of LTA plays an important role in modulating the properties of the cell wall in Gram-positive bacteria, influencing the net charge of the cell wall. The protein is D-alanyl carrier protein of Streptococcus pyogenes serotype M1.